The following is a 487-amino-acid chain: Acetyl-coenzyme A carboxylase carboxyl transferase subunit beta, chloroplastic (487 aa).

In terms of domain architecture, CoA carboxyltransferase N-terminal spans 223-487; that stretch reads LWVQCENCYG…LHAFFPLNQN (265 aa). Cys227, Cys230, Cys246, and Cys249 together coordinate Zn(2+). A C4-type zinc finger spans residues 227–249; it reads CENCYGLNYKKSFKSKMNLCEQC.

It belongs to the AccD/PCCB family. In terms of assembly, acetyl-CoA carboxylase is a heterohexamer composed of biotin carboxyl carrier protein, biotin carboxylase and 2 subunits each of ACCase subunit alpha and ACCase plastid-coded subunit beta (accD). Requires Zn(2+) as cofactor.

The protein localises to the plastid. It is found in the chloroplast stroma. It catalyses the reaction N(6)-carboxybiotinyl-L-lysyl-[protein] + acetyl-CoA = N(6)-biotinyl-L-lysyl-[protein] + malonyl-CoA. The protein operates within lipid metabolism; malonyl-CoA biosynthesis; malonyl-CoA from acetyl-CoA: step 1/1. Its function is as follows. Component of the acetyl coenzyme A carboxylase (ACC) complex. Biotin carboxylase (BC) catalyzes the carboxylation of biotin on its carrier protein (BCCP) and then the CO(2) group is transferred by the transcarboxylase to acetyl-CoA to form malonyl-CoA. This chain is Acetyl-coenzyme A carboxylase carboxyl transferase subunit beta, chloroplastic, found in Panax ginseng (Korean ginseng).